We begin with the raw amino-acid sequence, 168 residues long: Vasopressin-neurophysin 2-copeptin (168 aa).

A signal peptide spans 1-23 (MLARMLNTTLSACFLSLLAFSSA). A disulfide bond links Cys-24 and Cys-29. A Glycine amide modification is found at Gly-32. Cystine bridges form between Cys-45–Cys-89, Cys-48–Cys-62, Cys-56–Cys-79, Cys-63–Cys-69, Cys-96–Cys-108, Cys-102–Cys-120, and Cys-109–Cys-114. Residue Asn-135 is glycosylated (N-linked (GlcNAc...) asparagine).

The protein belongs to the vasopressin/oxytocin family. Interacts with vasopressin receptors V1bR/AVPR1B (Ki=85 pM), V1aR/AVPR1A (Ki=0.6 nM) and V2R/AVPR2 (Ki=4.9 nM). Interacts with oxytocin receptor (OXTR) (Ki=110 nM).

The protein localises to the secreted. Neurophysin 2 specifically binds vasopressin. In terms of biological role, vasopressin has a direct antidiuretic action on the kidney, it also causes vasoconstriction of the peripheral vessels. Acts by binding to vasopressin receptors (V1bR/AVPR1B, V1aR/AVPR1A, and V2R/AVPR2). The protein is Vasopressin-neurophysin 2-copeptin (Avp) of Mus musculus (Mouse).